The chain runs to 120 residues: NAD(P)H-quinone oxidoreductase subunit 3, chloroplastic (120 aa).

The next 3 membrane-spanning stretches (helical) occupy residues 2 to 22 (FLLY…VIPI), 64 to 84 (MFAL…PWAL), and 88 to 108 (ILGV…VLGL).

It belongs to the complex I subunit 3 family. In terms of assembly, NDH is composed of at least 16 different subunits, 5 of which are encoded in the nucleus.

It localises to the plastid. The protein resides in the chloroplast thylakoid membrane. The catalysed reaction is a plastoquinone + NADH + (n+1) H(+)(in) = a plastoquinol + NAD(+) + n H(+)(out). It catalyses the reaction a plastoquinone + NADPH + (n+1) H(+)(in) = a plastoquinol + NADP(+) + n H(+)(out). Its function is as follows. NDH shuttles electrons from NAD(P)H:plastoquinone, via FMN and iron-sulfur (Fe-S) centers, to quinones in the photosynthetic chain and possibly in a chloroplast respiratory chain. The immediate electron acceptor for the enzyme in this species is believed to be plastoquinone. Couples the redox reaction to proton translocation, and thus conserves the redox energy in a proton gradient. This Oenothera biennis (German evening primrose) protein is NAD(P)H-quinone oxidoreductase subunit 3, chloroplastic.